We begin with the raw amino-acid sequence, 766 residues long: Sucrose synthase (766 aa).

Residues 220-698 (MVFNVVILSV…GLLRIKERYT (479 aa)) are GT-B glycosyltransferase.

It belongs to the glycosyltransferase 1 family. Plant sucrose synthase subfamily. Expressed most predominantly in tap root.

It carries out the reaction an NDP-alpha-D-glucose + D-fructose = a ribonucleoside 5'-diphosphate + sucrose + H(+). Sucrose-cleaving enzyme that provides UDP-glucose and fructose for various metabolic pathways. This chain is Sucrose synthase (SS1), found in Beta vulgaris (Sugar beet).